A 239-amino-acid polypeptide reads, in one-letter code: tRNA (guanine-N(7)-)-methyltransferase (239 aa).

Positions 69, 94, 121, and 144 each coordinate S-adenosyl-L-methionine. Asp-144 is a catalytic residue. Substrate is bound at residue Lys-148. Positions 150 to 155 (RHNKRR) are interaction with RNA. Substrate contacts are provided by residues Asp-180 and 217–220 (TKFE).

It belongs to the class I-like SAM-binding methyltransferase superfamily. TrmB family. In terms of assembly, monomer.

The enzyme catalyses guanosine(46) in tRNA + S-adenosyl-L-methionine = N(7)-methylguanosine(46) in tRNA + S-adenosyl-L-homocysteine. It participates in tRNA modification; N(7)-methylguanine-tRNA biosynthesis. Its function is as follows. Catalyzes the formation of N(7)-methylguanine at position 46 (m7G46) in tRNA. The polypeptide is tRNA (guanine-N(7)-)-methyltransferase (Shigella dysenteriae serotype 1 (strain Sd197)).